A 399-amino-acid polypeptide reads, in one-letter code: Myb-related transcription factor, partner of profilin (399 aa).

The 73-residue stretch at 12–84 (TTRLRKPRFS…EVQKRWNDFK (73 aa)) folds into the Myb-like domain. A Nuclear localization signal motif is present at residues 83 to 86 (FKRR). Disordered regions lie at residues 87-108 (TKEKLARVPHSTQGAGPAAEDA), 127-261 (PGAG…PSLD), 297-332 (LLPGTPVDSLPPPLPPPPPPPPPPRPVLPPPAPKVE), and 358-399 (APRS…WKSP). Residues 127 to 136 (PGAGAGAEEP) show a composition bias toward low complexity. Residues 137 to 149 (PAAPSSQPPPPSA) are compositionally biased toward pro residues. Positions 156–170 (LSEDRREDRRADTSA) are enriched in basic and acidic residues. 3 stretches are compositionally biased toward pro residues: residues 219–252 (SPPPPAPPLPPPPPLAQVAPSPPSPPPPPRPPPT), 305–329 (SLPPPLPPPPPPPPPPRPVLPPPAP), and 366–377 (PRPPPAPLPPHD). Positions 381 to 399 (HKRRKGFPTRKRRGRWKSP) are enriched in basic residues. Short sequence motifs (nuclear localization signal) lie at residues 382–385 (KRRK) and 390–393 (RKRR).

As to quaternary structure, interacts with PFN1. Homodimer and heterodimer with PFN1.

It localises to the nucleus. Transcriptional repressor; DNA-binding protein that specifically recognizes the core sequence 5'-YAAC[GT]G-3'. Dimerization with PFN1 reduces its DNA-binding capacity. The sequence is that of Myb-related transcription factor, partner of profilin (MYPOP) from Homo sapiens (Human).